A 102-amino-acid polypeptide reads, in one-letter code: Co-chaperonin GroES (102 aa).

The protein belongs to the GroES chaperonin family. As to quaternary structure, heptamer of 7 subunits arranged in a ring. Interacts with the chaperonin GroEL.

The protein resides in the cytoplasm. Functionally, together with the chaperonin GroEL, plays an essential role in assisting protein folding. The GroEL-GroES system forms a nano-cage that allows encapsulation of the non-native substrate proteins and provides a physical environment optimized to promote and accelerate protein folding. GroES binds to the apical surface of the GroEL ring, thereby capping the opening of the GroEL channel. This Streptomyces griseus subsp. griseus (strain JCM 4626 / CBS 651.72 / NBRC 13350 / KCC S-0626 / ISP 5235) protein is Co-chaperonin GroES.